Here is a 311-residue protein sequence, read N- to C-terminus: GTPase Era (311 aa).

The 168-residue stretch at 18–185 folds into the Era-type G domain; sequence RSGFVALIGA…AKYLAESVPN (168 aa). Residues 26 to 33 are G1; the sequence is GAPNAGKS. 26-33 contacts GTP; sequence GAPNAGKS. Positions 52-56 are G2; sequence QTTRA. Residues 73–76 are G3; that stretch reads DTPG. Residues 73 to 77 and 135 to 138 each bind GTP; these read DTPGI and NKVD. Positions 135–138 are G4; it reads NKVD. Residues 164-166 form a G5 region; it reads ISA. The KH type-2 domain occupies 216-293; the sequence is LHEELPYAST…HQFLFVKVRE (78 aa).

The protein belongs to the TRAFAC class TrmE-Era-EngA-EngB-Septin-like GTPase superfamily. Era GTPase family. Monomer.

It localises to the cytoplasm. It is found in the cell inner membrane. Functionally, an essential GTPase that binds both GDP and GTP, with rapid nucleotide exchange. Plays a role in 16S rRNA processing and 30S ribosomal subunit biogenesis and possibly also in cell cycle regulation and energy metabolism. The chain is GTPase Era from Brucella melitensis biotype 1 (strain ATCC 23456 / CCUG 17765 / NCTC 10094 / 16M).